A 581-amino-acid polypeptide reads, in one-letter code: Cytosolic Fe-S cluster assembly factor nar-1 (581 aa).

Cys-20, Cys-68, Cys-71, Cys-74, Cys-215, Cys-270, Cys-457, and Cys-461 together coordinate [4Fe-4S] cluster.

Belongs to the NARF family.

Component of the cytosolic Fe/S protein assembly machinery. Required for maturation of extramitochondrial Fe/S proteins. May play a role in the transfer of pre-assembled Fe/S clusters to target apoproteins. The sequence is that of Cytosolic Fe-S cluster assembly factor nar-1 (nar-1) from Neurospora crassa (strain ATCC 24698 / 74-OR23-1A / CBS 708.71 / DSM 1257 / FGSC 987).